A 360-amino-acid chain; its full sequence is MSDSLSNITIERKHNHVEICLHEAVGFDRKSAGFDEIEFIHNALPEIRFSDIDLSTTFLGRKIGAPLMISSMTGGFEKASLLNRRFAEAAEHFGIPLGIGSMRQALENSTQKESFAIVRKYAPSVPVFANIGAPEVARGLSASDIGILLELIEADALIVHLNAAQELFQPEGNTDFRHVLDQLSHLCATVPVPVIVKEVGCGISGVCAQRVLDAGVKVIDVAGAGGISWQKVEEIRYVRQRERENRFSPEALDDLLNWGIPTARCIAEVSDLKKHTVHTDFEIIASGGIRSGLDIAKSLALGARIGASAGQLLNAAHEERLEETIETWLNDLRAVLFLTGTTSPDKLQKQHLILKHRPIL.

12–13 (RK) lines the substrate pocket. Residues S70, 71–73 (SMT), S101, and N130 contribute to the FMN site. 101–103 (SMR) serves as a coordination point for substrate. Q165 provides a ligand contact to substrate. Residue E166 participates in Mg(2+) binding. FMN contacts are provided by residues K197, 288–290 (GIR), and 309–310 (AG).

The protein belongs to the IPP isomerase type 2 family. Homooctamer. Dimer of tetramers. FMN serves as cofactor. The cofactor is NADPH. It depends on Mg(2+) as a cofactor.

It is found in the cytoplasm. It catalyses the reaction isopentenyl diphosphate = dimethylallyl diphosphate. Functionally, involved in the biosynthesis of isoprenoids. Catalyzes the 1,3-allylic rearrangement of the homoallylic substrate isopentenyl (IPP) to its allylic isomer, dimethylallyl diphosphate (DMAPP). This Chlorobium limicola (strain DSM 245 / NBRC 103803 / 6330) protein is Isopentenyl-diphosphate delta-isomerase.